A 326-amino-acid polypeptide reads, in one-letter code: Protein TMED8 (326 aa).

The tract at residues 1-99 (MSDRQAAEGP…EGQAPGEQAA (99 aa)) is disordered. The span at 50-65 (SSPLASASDPAAESSP) shows a compositional bias: low complexity. A GOLD domain is found at 160-324 (PPCVWTFAKV…NKTLYFHIYY (165 aa)). Residue Lys-170 is modified to N6-acetyllysine. The disordered stretch occupies residues 234–268 (VQVSDSSEDEEEEEDEEEEIEEPVPVGDVERGSRS). The span at 239–255 (SSEDEEEEEDEEEEIEE) shows a compositional bias: acidic residues.

The polypeptide is Protein TMED8 (Tmed8) (Mus musculus (Mouse)).